A 198-amino-acid chain; its full sequence is Altered inheritance of mitochondria protein 34, mitochondrial (198 aa).

A mitochondrion-targeting transit peptide spans 1–55; the sequence is MSISLFGRIVSQQFSGIRAAGPGRSLYLPFTLLLKQPGAYKVSLHRYVHSTQTKS. In terms of domain architecture, SAP spans 69–103; the sequence is FQKFTVKVLKEQCKSRGLKLSGRKSDLLQRLITHD. Residues 172 to 187 form a helical membrane-spanning segment; sequence IFLLGFFMLSCLWWNL.

The protein belongs to the AIM34 family.

It is found in the mitochondrion membrane. This is Altered inheritance of mitochondria protein 34, mitochondrial (AIM34) from Saccharomyces cerevisiae (strain JAY291) (Baker's yeast).